Here is a 473-residue protein sequence, read N- to C-terminus: Cysteine--tRNA ligase (473 aa).

A Zn(2+)-binding site is contributed by cysteine 27. Positions 29–39 (ITPYDHVHVGH) match the 'HIGH' region motif. Zn(2+)-binding residues include cysteine 213, histidine 238, and glutamate 242. Positions 271–275 (KMSKS) match the 'KMSKS' region motif. Residue lysine 274 participates in ATP binding.

It belongs to the class-I aminoacyl-tRNA synthetase family. Requires Zn(2+) as cofactor.

It is found in the cytoplasm. The enzyme catalyses tRNA(Cys) + L-cysteine + ATP = L-cysteinyl-tRNA(Cys) + AMP + diphosphate. In Pyrobaculum calidifontis (strain DSM 21063 / JCM 11548 / VA1), this protein is Cysteine--tRNA ligase.